Consider the following 188-residue polypeptide: Adenine phosphoribosyltransferase (188 aa).

Belongs to the purine/pyrimidine phosphoribosyltransferase family. Homodimer.

Its subcellular location is the cytoplasm. It catalyses the reaction AMP + diphosphate = 5-phospho-alpha-D-ribose 1-diphosphate + adenine. It functions in the pathway purine metabolism; AMP biosynthesis via salvage pathway; AMP from adenine: step 1/1. Its function is as follows. Catalyzes a salvage reaction resulting in the formation of AMP, that is energically less costly than de novo synthesis. This chain is Adenine phosphoribosyltransferase, found in Salinispora tropica (strain ATCC BAA-916 / DSM 44818 / JCM 13857 / NBRC 105044 / CNB-440).